The chain runs to 265 residues: MEVLKRENPLIHMITNYVTVNDLAQVTINYGGLPLMATHHDELKEITKMANGLLVNIGTLEPYQMESSMISMKIAKEKGIPSVLDPVGVQASKLRRDFAKKIILEGEPSLIKGNLAEIKTLIGETSNSIGIDSFEDSLSENTKNKIKEYARERNLVVVVSGVVDFITNGEESASVKNGTYKMSKITGTGCMLGALLTLALSFYDHKDLRFKEVVKAVSTWGICGELAEERLREKEGLMTFKHNLLDELSIINDETIKEREKVIYE.

Residue M36 participates in substrate binding. Residues K112 and S160 each coordinate ATP. Substrate is bound at residue G187.

This sequence belongs to the Thz kinase family. Requires Mg(2+) as cofactor.

It carries out the reaction 5-(2-hydroxyethyl)-4-methylthiazole + ATP = 4-methyl-5-(2-phosphooxyethyl)-thiazole + ADP + H(+). Its pathway is cofactor biosynthesis; thiamine diphosphate biosynthesis; 4-methyl-5-(2-phosphoethyl)-thiazole from 5-(2-hydroxyethyl)-4-methylthiazole: step 1/1. In terms of biological role, catalyzes the phosphorylation of the hydroxyl group of 4-methyl-5-beta-hydroxyethylthiazole (THZ). The chain is Hydroxyethylthiazole kinase from Clostridium perfringens (strain 13 / Type A).